The sequence spans 148 residues: Putative anti-anti-sigma factor Rv2638 (148 aa).

Residues 30-141 (LRATTDGSGA…PTVDTALGKG (112 aa)) enclose the STAS domain.

The protein belongs to the anti-sigma-factor antagonist family. Interacts with unphosphorylated OprA.

This chain is Putative anti-anti-sigma factor Rv2638, found in Mycobacterium tuberculosis (strain ATCC 25618 / H37Rv).